A 224-amino-acid polypeptide reads, in one-letter code: Cytidylate kinase (224 aa).

11–19 contributes to the ATP binding site; it reads GPAGAGKST.

The protein belongs to the cytidylate kinase family. Type 1 subfamily.

It is found in the cytoplasm. The catalysed reaction is CMP + ATP = CDP + ADP. It catalyses the reaction dCMP + ATP = dCDP + ADP. In Lysinibacillus sphaericus (strain C3-41), this protein is Cytidylate kinase.